The chain runs to 327 residues: Methionyl-tRNA formyltransferase (327 aa).

118-121 (SLLP) contributes to the (6S)-5,6,7,8-tetrahydrofolate binding site.

Belongs to the Fmt family.

The enzyme catalyses L-methionyl-tRNA(fMet) + (6R)-10-formyltetrahydrofolate = N-formyl-L-methionyl-tRNA(fMet) + (6S)-5,6,7,8-tetrahydrofolate + H(+). Functionally, attaches a formyl group to the free amino group of methionyl-tRNA(fMet). The formyl group appears to play a dual role in the initiator identity of N-formylmethionyl-tRNA by promoting its recognition by IF2 and preventing the misappropriation of this tRNA by the elongation apparatus. The polypeptide is Methionyl-tRNA formyltransferase (Corynebacterium jeikeium (strain K411)).